The primary structure comprises 344 residues: Krueppel-like factor 3 (344 aa).

A repressor domain region spans residues 1-74 (MLMFDPVPVK…TVNKRGSPPA (74 aa)). Residue lysine 10 forms a Glycyl lysine isopeptide (Lys-Gly) (interchain with G-Cter in SUMO) linkage. The short motif at 60–68 (EPVDLTVNK) is the 9aaTAD; inactive element. The short motif at 61-65 (PVDLT) is the CTBP-binding motif element. The tract at residues 66-111 (VNKRGSPPAAGGSPSSLKFPSHRRASPGLSMPSSSPPIKKYSPPSP) is disordered. Residue lysine 68 forms a Glycyl lysine isopeptide (Lys-Gly) (interchain with G-Cter in SUMO2) linkage. 2 stretches are compositionally biased toward low complexity: residues 70-81 (GSPPAAGGSPSS) and 91-107 (SPGL…KKYS). Phosphoserine is present on residues serine 71, serine 91, serine 100, serine 107, and serine 110. Residue lysine 195 forms a Glycyl lysine isopeptide (Lys-Gly) (interchain with G-Cter in SUMO2) linkage. Lysine 197 is covalently cross-linked (Glycyl lysine isopeptide (Lys-Gly) (interchain with G-Cter in SUMO); alternate). Lysine 197 is covalently cross-linked (Glycyl lysine isopeptide (Lys-Gly) (interchain with G-Cter in SUMO2); alternate). Phosphoserine occurs at positions 215, 223, and 249. Residues 235–254 (SVIVQPGKRPLPVESPDTQR) are disordered. 3 consecutive C2H2-type zinc fingers follow at residues 259–283 (HRCD…RRTH), 289–313 (YKCT…FRKH), and 319–341 (FQCP…RKRH).

The protein belongs to the krueppel C2H2-type zinc-finger protein family. In terms of assembly, monomer. Post-translationally, sumoylated with SUMO1. Sumoylation is enhanced by PIAS1, PIAS2alpha and PIAS2beta, and PIAS4, but not by Pc2. Enhances transcriptional repression, but has no effect on DNA binding. Sumoylation on Lys-197 is the major site. As to expression, in 8.5 day embryos, expressed in midbrain, anterior hindbrain and ventral forebrain. In 9 day embryos, expressed throughout ventral anterior half of embryo including midbrain-hindbrain junction, ventral midbrain, diencephalon and forebrain. At 10.5 days, distribution is more widespread with expression also found in developing limb buds. Widely expressed in the adult.

The protein resides in the nucleus. Binds to the CACCC box of erythroid cell-expressed genes. May play a role in hematopoiesis. This Mus musculus (Mouse) protein is Krueppel-like factor 3 (Klf3).